Reading from the N-terminus, the 173-residue chain is MLGIADMQPRQLAAQILNFALVLSTAFMMWKGLSVVSDSPSPIVVVLSGSMEPAFQRGDLLFLWNRGADTQVGEIVVYNVKGKDIPIVHRVVRRYGGGKTPLRLLTKGDNNLADDTELYAAGQSFLNRQEDVIGSVVGFIPFVGYVTILLSEHPWLKQVMLGLMGVMVVLQRE.

The Cytoplasmic segment spans residues 1–15 (MLGIADMQPRQLAAQ). The chain crosses the membrane as a helical; Signal-anchor for type II membrane protein span at residues 16–36 (ILNFALVLSTAFMMWKGLSVV). Residues 37-173 (SDSPSPIVVV…MGVMVVLQRE (137 aa)) are Lumenal-facing. Active-site charge relay system residues include Ser-50, His-89, and Asp-115. The tract at residues 159–170 (VMLGLMGVMVVL) is C-terminal short (CTS) helix.

Belongs to the peptidase S26B family. Component of the signal peptidase complex (SPC) composed of a catalytic subunit SEC11 and three accessory subunits SPC1, SPC2 and SPC3. The complex induces a local thinning of the ER membrane which is used to measure the length of the signal peptide (SP) h-region of protein substrates. This ensures the selectivity of the complex towards h-regions shorter than 18-20 amino acids. SPC associates with the translocon complex.

It is found in the endoplasmic reticulum membrane. It carries out the reaction Cleavage of hydrophobic, N-terminal signal or leader sequences from secreted and periplasmic proteins.. Functionally, catalytic component of the signal peptidase complex (SPC) which catalyzes the cleavage of N-terminal signal sequences from nascent proteins as they are translocated into the lumen of the endoplasmic reticulum. Specifically cleaves N-terminal signal peptides that contain a hydrophobic alpha-helix (h-region) shorter than 18-20 amino acids. This chain is Signal peptidase complex catalytic subunit sec11 (sec11), found in Pyrenophora tritici-repentis (strain Pt-1C-BFP) (Wheat tan spot fungus).